Reading from the N-terminus, the 88-residue chain is Small ribosomal subunit protein bS20 (88 aa).

This sequence belongs to the bacterial ribosomal protein bS20 family.

Binds directly to 16S ribosomal RNA. This is Small ribosomal subunit protein bS20 from Micrococcus luteus (strain ATCC 4698 / DSM 20030 / JCM 1464 / CCM 169 / CCUG 5858 / IAM 1056 / NBRC 3333 / NCIMB 9278 / NCTC 2665 / VKM Ac-2230) (Micrococcus lysodeikticus).